Reading from the N-terminus, the 315-residue chain is Calumenin-B (315 aa).

Residues 1 to 19 form the signal peptide; the sequence is MEQWPLLFVVALCILQSSS. A compositionally biased stretch (basic and acidic residues) spans 22 to 39; the sequence is MEKKDRVHHDAPLSNKDH. Positions 22 to 42 are disordered; sequence MEKKDRVHHDAPLSNKDHDDE. 6 EF-hand domains span residues 68-103, 104-139, 151-186, 188-223, 229-264, and 265-300; these read ESKE…AQRR, WIYE…YILD, QMMT…EEFD, MKDI…QNGD, WVKT…ADYD, and HAEA…FVGS. Ca(2+)-binding residues include Asp81, Asp83, Asp85, Glu92, Asp117, Asn119, Asp121, Glu128, Asp164, Asp166, Asp168, Arg170, Glu175, Asp201, Asn203, Asp205, Glu212, Asp242, Asn244, Asp246, Arg248, Glu253, Asp278, Asp280, Asp282, Arg284, and Glu289. The short motif at 312-315 is the Prevents secretion from ER element; that stretch reads HDEF.

It belongs to the CREC family. In terms of assembly, interacts with ggcx.

Its subcellular location is the endoplasmic reticulum membrane. The protein resides in the golgi apparatus. The protein localises to the secreted. It is found in the melanosome. It localises to the sarcoplasmic reticulum lumen. In terms of biological role, involved in regulation of vitamin K-dependent carboxylation of multiple N-terminal glutamate residues. Seems to inhibit gamma-carboxylase ggcx. Binds 7 calcium ions with a low affinity. This Danio rerio (Zebrafish) protein is Calumenin-B (calub).